Consider the following 434-residue polypeptide: Nuclear receptor subfamily 1 group I member 2 (434 aa).

The segment at residues 38 to 107 (PQICRVCGDK…RLRKCLESGM (70 aa)) is a DNA-binding region (nuclear receptor). 2 consecutive NR C4-type zinc fingers follow at residues 41 to 61 (CRVC…CEGC) and 77 to 102 (CPFR…LRKC). Positions 66 to 92 (RRAMKRNARLRCPFRKGACEITRKTRR) match the Bipartite nuclear localization signal motif. A hinge region spans residues 108–145 (KKEMIMSDEAVEERRALIKRKKSERTGTQPLGVQGLTE). The NR LBD domain occupies 146–433 (EQRMMIRELM…LMQELFGITG (288 aa)). Hyperforin contacts are provided by residues Ser-247, 285 to 288 (QLRF), and His-407.

Belongs to the nuclear hormone receptor family. NR1 subfamily. As to quaternary structure, heterodimer with RXR. Interacts with NCOA1. Interacts (via domain NR LBD) with CRY1 and CRY2 in a ligand-dependent manner. Expressed in liver, colon and small intestine.

It is found in the nucleus. Its function is as follows. Nuclear receptor that binds and is activated by variety of endogenous and xenobiotic compounds. Transcription factor that activates the transcription of multiple genes involved in the metabolism and secretion of potentially harmful xenobiotics, drugs and endogenous compounds. Activated by the antibiotic rifampicin and various plant metabolites, such as hyperforin, guggulipid, colupulone, and isoflavones. Response to specific ligands is species-specific. Activated by naturally occurring steroids, such as pregnenolone and progesterone. Binds to a response element in the promoters of the CYP3A4 and ABCB1/MDR1 genes. The protein is Nuclear receptor subfamily 1 group I member 2 (NR1I2) of Homo sapiens (Human).